A 125-amino-acid polypeptide reads, in one-letter code: N-alpha-acetyltransferase 38, NatC auxiliary subunit (125 aa).

The disordered stretch occupies residues 1 to 42 (MAGAGPTMLLREENGCCSRRQSSSSAGDSDGEQEDSPATRAR). Alanine 2 is modified (N-acetylalanine). The segment covering 18–28 (SRRQSSSSAGD) has biased composition (low complexity). 3 positions are modified to phosphoserine: serine 22, serine 25, and serine 29. The 79-residue stretch at 40–118 (RARQQLEALL…IVSIEVQRES (79 aa)) folds into the Sm domain.

Belongs to the snRNP Sm proteins family. Component of the N-terminal acetyltransferase C (NatC) complex, which is composed of NAA35, NAA38 and NAA30.

The protein resides in the cytoplasm. The protein localises to the nucleus. In terms of biological role, auxillary component of the N-terminal acetyltransferase C (NatC) complex which catalyzes acetylation of N-terminal methionine residues. N-terminal acetylation protects proteins from ubiquitination and degradation by the N-end rule pathway. The chain is N-alpha-acetyltransferase 38, NatC auxiliary subunit (Naa38) from Mus musculus (Mouse).